The following is a 100-amino-acid chain: Apolipoprotein C-II (100 aa).

The N-terminal stretch at 1 to 22 is a signal peptide; that stretch reads MGTRFLLALFLVLLVLGFEVQG. A lipid binding region spans residues 66 to 74; the sequence is TVDEKLRDM. The segment at 78–100 is lipoprotein lipase cofactor; sequence STAAVSTYAGIFTDQLLTLLKGD.

This sequence belongs to the apolipoprotein C2 family. In terms of processing, proapolipoprotein C-II is synthesized as a sialic acid containing glycoprotein which is subsequently desialylated prior to its proteolytic processing. Proapolipoprotein C-II, the major form found in plasma undergoes proteolytic cleavage of its N-terminal hexapeptide to generate apolipoprotein C-II, which occurs as the minor form in plasma.

It is found in the secreted. In terms of biological role, component of chylomicrons, very low-density lipoproteins (VLDL), low-density lipoproteins (LDL), and high-density lipoproteins (HDL) in plasma. Plays an important role in lipoprotein metabolism as an activator of lipoprotein lipase. Both proapolipoprotein C-II and apolipoprotein C-II can activate lipoprotein lipase. The sequence is that of Apolipoprotein C-II (APOC2) from Otolemur garnettii (Small-eared galago).